A 130-amino-acid polypeptide reads, in one-letter code: ATP synthase epsilon chain (130 aa).

Belongs to the ATPase epsilon chain family. In terms of assembly, F-type ATPases have 2 components, CF(1) - the catalytic core - and CF(0) - the membrane proton channel. CF(1) has five subunits: alpha(3), beta(3), gamma(1), delta(1), epsilon(1). CF(0) has three main subunits: a, b and c.

The protein resides in the cell membrane. Its function is as follows. Produces ATP from ADP in the presence of a proton gradient across the membrane. The chain is ATP synthase epsilon chain (atpC) from Mycoplasmoides gallisepticum (strain R(low / passage 15 / clone 2)) (Mycoplasma gallisepticum).